The chain runs to 382 residues: Galactokinase (382 aa).

34 to 37 contacts substrate; sequence EHTD. 124–130 is an ATP binding site; that stretch reads GAGLSSS. Mg(2+)-binding residues include S130 and E162. Residue D174 is the Proton acceptor of the active site. Y223 serves as a coordination point for substrate.

The protein belongs to the GHMP kinase family. GalK subfamily.

Its subcellular location is the cytoplasm. The catalysed reaction is alpha-D-galactose + ATP = alpha-D-galactose 1-phosphate + ADP + H(+). It functions in the pathway carbohydrate metabolism; galactose metabolism. Its function is as follows. Catalyzes the transfer of the gamma-phosphate of ATP to D-galactose to form alpha-D-galactose-1-phosphate (Gal-1-P). This chain is Galactokinase, found in Salmonella choleraesuis (strain SC-B67).